Consider the following 187-residue polypeptide: Elongation factor P (187 aa).

Belongs to the elongation factor P family.

The protein localises to the cytoplasm. Its pathway is protein biosynthesis; polypeptide chain elongation. Involved in peptide bond synthesis. Stimulates efficient translation and peptide-bond synthesis on native or reconstituted 70S ribosomes in vitro. Probably functions indirectly by altering the affinity of the ribosome for aminoacyl-tRNA, thus increasing their reactivity as acceptors for peptidyl transferase. The chain is Elongation factor P from Corynebacterium jeikeium (strain K411).